A 117-amino-acid polypeptide reads, in one-letter code: Large ribosomal subunit protein bL20 (117 aa).

Belongs to the bacterial ribosomal protein bL20 family.

Binds directly to 23S ribosomal RNA and is necessary for the in vitro assembly process of the 50S ribosomal subunit. It is not involved in the protein synthesizing functions of that subunit. This is Large ribosomal subunit protein bL20 from Campylobacter fetus subsp. fetus (strain 82-40).